A 2203-amino-acid chain; its full sequence is Genome polyprotein (2203 aa).

Gly2 is lipidated: N-myristoyl glycine; by host. Over 2-1513 (GAQVSTQKTG…HVSRAFICLQ (1512 aa)) the chain is Cytoplasmic. Residues 567 to 583 (ELQNDVRQAVEGAIGRV) form an amphipathic alpha-helix region. Active-site for protease 2A activity residues include His890 and Asp908. The Zn(2+) site is built by Cys925 and Cys927. The active-site For protease 2A activity is the Cys979. Residues Cys985 and His987 each contribute to the Zn(2+) site. The tract at residues 1119–1191 (SNGWLKKFTE…EQSAPSQSDQ (73 aa)) is membrane-binding. Positions 1119–1257 (SNGWLKKFTE…SPGAGKSVAT (139 aa)) are oligomerization. Positions 1140–1144 (AVKIQ) are RNA-binding. The SF3 helicase domain maps to 1223–1379 (EKKMSNYIQF…SMYSQNGKIN (157 aa)). Positions 1387, 1399, and 1404 each coordinate Zn(2+). A C4-type; degenerate zinc finger spans residues 1387–1404 (CDEECCPVNFKRCCPLVC). The RNA-binding stretch occupies residues 1431 to 1438 (EYNHRHSV). An oligomerization region spans residues 1442–1447 (LEALFQ). The stretch at 1514–1529 (ALTTFVSVAGIIYIIY) is an intramembrane region. Topologically, residues 1530–2203 (KLFAGFQGAY…TLRRKWLDSF (674 aa)) are cytoplasmic. The residue at position 1539 (Tyr1539) is an O-(5'-phospho-RNA)-tyrosine. In terms of domain architecture, Peptidase C3 spans 1559–1737 (GPAFEFAVAM…FSAALLRHYF (179 aa)). Residues His1598, Glu1629, and Cys1705 each act as for protease 3C activity in the active site. One can recognise a RdRp catalytic domain in the interval 1968 to 2084 (GHLIAFDYSG…SYPWPIDASL (117 aa)). Mg(2+) is bound by residues Asp1974 and Asp2070.

Belongs to the picornaviruses polyprotein family. As to quaternary structure, interacts with capsid protein VP1 and capsid protein VP3 to form heterotrimeric protomers. In terms of assembly, interacts with capsid protein VP0, and capsid protein VP3 to form heterotrimeric protomers. Five protomers subsequently associate to form pentamers which serve as building blocks for the capsid. Interacts with capsid protein VP2, capsid protein VP3 and capsid protein VP4 following cleavage of capsid protein VP0. Interacts with capsid protein VP1 and capsid protein VP3 in the mature capsid. As to quaternary structure, interacts with capsid protein VP0 and capsid protein VP1 to form heterotrimeric protomers. Five protomers subsequently associate to form pentamers which serve as building blocks for the capsid. Interacts with capsid protein VP4 in the mature capsid. Interacts with protein 2C; this interaction may be important for virion morphogenesis. In terms of assembly, interacts with capsid protein VP1 and capsid protein VP3. Homodimer. As to quaternary structure, homohexamer; forms a hexameric ring structure with 6-fold symmetry characteristic of AAA+ ATPases. Interacts (via N-terminus) with host RTN3 (via reticulon domain); this interaction is important for viral replication. Interacts with capsid protein VP3; this interaction may be important for virion morphogenesis. In terms of assembly, interacts with protein 3CD. Homodimer. Interacts with host GBF1. Interacts (via GOLD domain) with host ACBD3 (via GOLD domain); this interaction allows the formation of a viral protein 3A/ACBD3 heterotetramer with a 2:2 stoichiometry, which will stimulate the recruitment of host PI4KB in order to synthesize PI4P at the viral RNA replication sites. As to quaternary structure, interacts with RNA-directed RNA polymerase. In terms of assembly, interacts with protein 3AB and with RNA-directed RNA polymerase. Interacts with Viral protein genome-linked and with protein 3CD. Requires Mg(2+) as cofactor. Specific enzymatic cleavages in vivo by the viral proteases yield processing intermediates and the mature proteins. Post-translationally, myristoylation is required for the formation of pentamers during virus assembly. Further assembly of 12 pentamers and a molecule of genomic RNA generates the provirion. In terms of processing, during virion maturation, immature virions are rendered infectious following cleavage of VP0 into VP4 and VP2. This maturation seems to be an autocatalytic event triggered by the presence of RNA in the capsid and it is followed by a conformational change infectious virion. Myristoylation is required during RNA encapsidation and formation of the mature virus particle. Post-translationally, VPg is uridylylated by the polymerase into VPg-pUpU. This acts as a nucleotide-peptide primer for the genomic RNA replication.

Its subcellular location is the virion. The protein resides in the host cytoplasm. It localises to the host cytoplasmic vesicle membrane. The protein localises to the host nucleus. The enzyme catalyses a ribonucleoside 5'-triphosphate + H2O = a ribonucleoside 5'-diphosphate + phosphate + H(+). It catalyses the reaction Selective cleavage of Tyr-|-Gly bond in the picornavirus polyprotein.. It carries out the reaction RNA(n) + a ribonucleoside 5'-triphosphate = RNA(n+1) + diphosphate. The catalysed reaction is Selective cleavage of Gln-|-Gly bond in the poliovirus polyprotein. In other picornavirus reactions Glu may be substituted for Gln, and Ser or Thr for Gly.. Replication or transcription is subject to high level of random mutations by the nucleotide analog ribavirin. Forms an icosahedral capsid of pseudo T=3 symmetry with capsid proteins VP2 and VP3. The capsid is 300 Angstroms in diameter, composed of 60 copies of each capsid protein and enclosing the viral positive strand RNA genome. Capsid protein VP1 mainly forms the vertices of the capsid. Capsid protein VP1 interacts with host cell receptor to provide virion attachment to target host cells. This attachment induces virion internalization. Tyrosine kinases are probably involved in the entry process. After binding to its receptor, the capsid undergoes conformational changes. Capsid protein VP1 N-terminus (that contains an amphipathic alpha-helix) and capsid protein VP4 are externalized. Together, they shape a pore in the host membrane through which viral genome is translocated to host cell cytoplasm. Its function is as follows. Forms an icosahedral capsid of pseudo T=3 symmetry with capsid proteins VP2 and VP3. The capsid is 300 Angstroms in diameter, composed of 60 copies of each capsid protein and enclosing the viral positive strand RNA genome. In terms of biological role, lies on the inner surface of the capsid shell. After binding to the host receptor, the capsid undergoes conformational changes. Capsid protein VP4 is released, Capsid protein VP1 N-terminus is externalized, and together, they shape a pore in the host membrane through which the viral genome is translocated into the host cell cytoplasm. Functionally, component of immature procapsids, which is cleaved into capsid proteins VP4 and VP2 after maturation. Allows the capsid to remain inactive before the maturation step. Cysteine protease that cleaves viral polyprotein and specific host proteins. It is responsible for the autocatalytic cleavage between the P1 and P2 regions, which is the first cleavage occurring in the polyprotein. Also cleaves the host translation initiation factor EIF4G1, in order to shut down the capped cellular mRNA translation. Inhibits the host nucleus-cytoplasm protein and RNA trafficking by cleaving host members of the nuclear pores. Counteracts stress granule formation probably by antagonizing its assembly or promoting its dissassembly. Its function is as follows. Plays an essential role in the virus replication cycle by acting as a viroporin. Creates a pore in the host endoplasmic reticulum and as a consequence releases Ca2+ in the cytoplasm of infected cell. In turn, high levels of cytoplasmic calcium may trigger membrane trafficking and transport of viral ER-associated proteins to viroplasms, sites of viral genome replication. In terms of biological role, induces and associates with structural rearrangements of intracellular membranes. Displays RNA-binding, nucleotide binding and NTPase activities. May play a role in virion morphogenesis and viral RNA encapsidation by interacting with the capsid protein VP3. Functionally, localizes the viral replication complex to the surface of membranous vesicles. Together with protein 3CD binds the Cis-Active RNA Element (CRE) which is involved in RNA synthesis initiation. Acts as a cofactor to stimulate the activity of 3D polymerase, maybe through a nucleid acid chaperone activity. Localizes the viral replication complex to the surface of membranous vesicles. It inhibits host cell endoplasmic reticulum-to-Golgi apparatus transport and causes the disassembly of the Golgi complex, possibly through GBF1 interaction. This would result in depletion of MHC, trail receptors and IFN receptors at the host cell surface. Plays an essential role in viral RNA replication by recruiting ACBD3 and PI4KB at the viral replication sites, thereby allowing the formation of the rearranged membranous structures where viral replication takes place. Its function is as follows. Acts as a primer for viral RNA replication and remains covalently bound to viral genomic RNA. VPg is uridylylated prior to priming replication into VPg-pUpU. The oriI viral genomic sequence may act as a template for this. The VPg-pUpU is then used as primer on the genomic RNA poly(A) by the RNA-dependent RNA polymerase to replicate the viral genome. During genome replication, the VPg-RNA linkage is removed by the host TDP2, thereby accelerating replication. During the late stage of the replication cycle, host TDP2 is excluded from sites of viral RNA synthesis and encapsidation, allowing for the generation of progeny virions. In terms of biological role, involved in the viral replication complex and viral polypeptide maturation. It exhibits protease activity with a specificity and catalytic efficiency that is different from protease 3C. Protein 3CD lacks polymerase activity. Protein 3CD binds to the 5'UTR of the viral genome. Functionally, replicates the viral genomic RNA on the surface of intracellular membranes. May form linear arrays of subunits that propagate along a strong head-to-tail interaction called interface-I. Covalently attaches UMP to a tyrosine of VPg, which is used to prime RNA synthesis. The positive stranded RNA genome is first replicated at virus induced membranous vesicles, creating a dsRNA genomic replication form. This dsRNA is then used as template to synthesize positive stranded RNA genomes. ss(+)RNA genomes are either translated, replicated or encapsidated. Major viral protease that mediates proteolytic processing of the polyprotein. Cleaves host EIF5B, contributing to host translation shutoff. Also cleaves host PABPC1, contributing to host translation shutoff. Cleaves host NLRP1, triggers host N-glycine-mediated degradation of the autoinhibitory NLRP1 N-terminal fragment. This Echovirus 9 (strain Barty) protein is Genome polyprotein.